A 202-amino-acid chain; its full sequence is Small ribosomal subunit protein uS4c (202 aa).

In terms of domain architecture, S4 RNA-binding spans 90 to 159; it reads MRLDNIIFRL…TKNYEFSQTY (70 aa).

This sequence belongs to the universal ribosomal protein uS4 family. Part of the 30S ribosomal subunit. Contacts protein S5. The interaction surface between S4 and S5 is involved in control of translational fidelity.

It localises to the plastid. The protein localises to the chloroplast. In terms of biological role, one of the primary rRNA binding proteins, it binds directly to 16S rRNA where it nucleates assembly of the body of the 30S subunit. With S5 and S12 plays an important role in translational accuracy. This chain is Small ribosomal subunit protein uS4c (rps4), found in Huperzia lucidula (Shining clubmoss).